Reading from the N-terminus, the 899-residue chain is Bifunctional uridylyltransferase/uridylyl-removing enzyme (899 aa).

The interval 1 to 342 is uridylyltransferase; it reads MPQMDPELFD…RAGESGPATP (342 aa). A uridylyl-removing region spans residues 343–705; that stretch reads LNSRFQVRDG…TTQREFEGGT (363 aa). The 123-residue stretch at 461–583 folds into the HD domain; it reads VDAHTLNLIK…VGDQTHLDYL (123 aa). ACT domains lie at 706–784 and 816–897; these read QIFI…DEYP and ILEL…SLQI.

It belongs to the GlnD family. Requires Mg(2+) as cofactor.

The catalysed reaction is [protein-PII]-L-tyrosine + UTP = [protein-PII]-uridylyl-L-tyrosine + diphosphate. It carries out the reaction [protein-PII]-uridylyl-L-tyrosine + H2O = [protein-PII]-L-tyrosine + UMP + H(+). Its activity is regulated as follows. Uridylyltransferase (UTase) activity is inhibited by glutamine, while glutamine activates uridylyl-removing (UR) activity. Modifies, by uridylylation and deuridylylation, the PII regulatory proteins (GlnB and homologs), in response to the nitrogen status of the cell that GlnD senses through the glutamine level. Under low glutamine levels, catalyzes the conversion of the PII proteins and UTP to PII-UMP and PPi, while under higher glutamine levels, GlnD hydrolyzes PII-UMP to PII and UMP (deuridylylation). Thus, controls uridylylation state and activity of the PII proteins, and plays an important role in the regulation of nitrogen assimilation and metabolism. This chain is Bifunctional uridylyltransferase/uridylyl-removing enzyme, found in Ectopseudomonas mendocina (strain ymp) (Pseudomonas mendocina).